We begin with the raw amino-acid sequence, 218 residues long: GTP cyclohydrolase 1 (218 aa).

Zn(2+) contacts are provided by cysteine 109, histidine 112, and cysteine 180.

Belongs to the GTP cyclohydrolase I family. In terms of assembly, toroid-shaped homodecamer, composed of two pentamers of five dimers.

The catalysed reaction is GTP + H2O = 7,8-dihydroneopterin 3'-triphosphate + formate + H(+). It functions in the pathway cofactor biosynthesis; 7,8-dihydroneopterin triphosphate biosynthesis; 7,8-dihydroneopterin triphosphate from GTP: step 1/1. The chain is GTP cyclohydrolase 1 from Haemophilus ducreyi (strain 35000HP / ATCC 700724).